Consider the following 80-residue polypeptide: ALSLATPRRDNINALVDYLKNPTSYDGLDSIAEIHPSIKSADIYPRMRSLTDDDLYAIAGHIMLQPKVVSEKWGGGKIYF.

Met-47 lines the heme pocket.

The protein belongs to the cytochrome c family. PsbV subfamily. As to quaternary structure, PSII is composed of 1 copy each of membrane proteins PsbA, PsbB, PsbC, PsbD, PsbE, PsbF, PsbH, PsbI, PsbJ, PsbK, PsbL, PsbM, PsbT, PsbY, PsbZ, Psb30/Ycf12, at least 3 peripheral proteins of the oxygen-evolving complex and a large number of cofactors. It forms dimeric complexes. Heme serves as cofactor.

Its subcellular location is the plastid. It is found in the chloroplast thylakoid membrane. Functionally, one of the extrinsic, lumenal subunits of photosystem II (PSII). PSII is a light-driven water plastoquinone oxidoreductase, using light energy to abstract electrons from H(2)O, generating a proton gradient subsequently used for ATP formation. The extrinsic proteins stabilize the structure of photosystem II oxygen-evolving complex (OEC), the ion environment of oxygen evolution and protect the OEC against heat-induced inactivation. This chain is Photosystem II extrinsic protein V, found in Thalassiosira weissflogii (Marine diatom).